The following is an 891-amino-acid chain: Transportin-1 (891 aa).

HEAT repeat units follow at residues Gly-14–Gln-40, Phe-45–Ser-83, Tyr-92–Val-125, Leu-131–Asp-168, Asn-178–Val-208, Tyr-221–Ile-248, Lys-260–Ala-287, Pro-303–Val-381, Thr-389–Ala-420, Pro-432–Arg-459, Phe-477–Ala-510, Leu-518–Val-551, Lys-559–Gly-597, Glu-605–Ala-653, Leu-664–Pro-695, Gln-703–Gly-740, Ile-748–Pro-784, Asp-792–Asn-825, and Thr-834–Leu-866. In terms of domain architecture, Importin N-terminal spans Ile-35–Ala-103. The span at Asp-317–Ser-330 shows a compositional bias: acidic residues. The tract at residues Asp-317 to Asp-337 is disordered.

Belongs to the importin beta family. Importin beta-2 subfamily.

Its subcellular location is the cytoplasm. It is found in the nucleus. The protein localises to the nucleoplasm. Functionally, functions in nuclear protein import as nuclear transport receptor. Serves as receptor for nuclear localization signals (NLS) in cargo substrates. Is thought to mediate docking of the importin/substrate complex to the nuclear pore complex (NPC) through binding to nucleoporin and the complex is subsequently translocated through the pore by an energy requiring, Ran-dependent mechanism. At the nucleoplasmic side of the NPC, Ran binds to the importin, the importin/substrate complex dissociates and importin is re-exported from the nucleus to the cytoplasm where GTP hydrolysis releases Ran. The directionality of nuclear import is thought to be conferred by an asymmetric distribution of the GTP- and GDP-bound forms of Ran between the cytoplasm and nucleus. The sequence is that of Transportin-1 (TRN1) from Oryza sativa subsp. japonica (Rice).